We begin with the raw amino-acid sequence, 584 residues long: DNA mismatch repair protein MutL (584 aa).

It belongs to the DNA mismatch repair MutL/HexB family.

In terms of biological role, this protein is involved in the repair of mismatches in DNA. It is required for dam-dependent methyl-directed DNA mismatch repair. May act as a 'molecular matchmaker', a protein that promotes the formation of a stable complex between two or more DNA-binding proteins in an ATP-dependent manner without itself being part of a final effector complex. The chain is DNA mismatch repair protein MutL from Buchnera aphidicola subsp. Acyrthosiphon pisum (strain 5A).